Consider the following 271-residue polypeptide: Phosphatidylglycerol--prolipoprotein diacylglyceryl transferase (271 aa).

7 consecutive transmembrane segments (helical) span residues 21-41 (ISVR…MWLA), 60-80 (LLFA…VLFY), 95-115 (VWTG…AMLW), 124-144 (FFGV…VGRL), 176-196 (SQLY…NWFI), 203-223 (GSVS…VEYV), and 230-250 (LGLF…MIIG). Arg143 is a binding site for a 1,2-diacyl-sn-glycero-3-phospho-(1'-sn-glycerol).

This sequence belongs to the Lgt family.

Its subcellular location is the cell inner membrane. The catalysed reaction is L-cysteinyl-[prolipoprotein] + a 1,2-diacyl-sn-glycero-3-phospho-(1'-sn-glycerol) = an S-1,2-diacyl-sn-glyceryl-L-cysteinyl-[prolipoprotein] + sn-glycerol 1-phosphate + H(+). It functions in the pathway protein modification; lipoprotein biosynthesis (diacylglyceryl transfer). Catalyzes the transfer of the diacylglyceryl group from phosphatidylglycerol to the sulfhydryl group of the N-terminal cysteine of a prolipoprotein, the first step in the formation of mature lipoproteins. The polypeptide is Phosphatidylglycerol--prolipoprotein diacylglyceryl transferase (Vibrio vulnificus (strain CMCP6)).